Reading from the N-terminus, the 137-residue chain is MERTLSIIKPDAVAKNVIGKIIDRFETNGLRIAAMKKIQLSKNDAAKFYEVHKERPFFNDLVDYMTSGPVVVMVLEGENAVAKNRELMGATDPKEAKPGTIRADFAESIEANAVHGSDSLENAQKEIAFFFAQREIL.

ATP-binding residues include Lys9, Phe57, Arg85, Thr91, Arg102, and Asn112. His115 acts as the Pros-phosphohistidine intermediate in catalysis.

Belongs to the NDK family. As to quaternary structure, homotetramer. Requires Mg(2+) as cofactor.

It localises to the cytoplasm. The enzyme catalyses a 2'-deoxyribonucleoside 5'-diphosphate + ATP = a 2'-deoxyribonucleoside 5'-triphosphate + ADP. It catalyses the reaction a ribonucleoside 5'-diphosphate + ATP = a ribonucleoside 5'-triphosphate + ADP. Functionally, major role in the synthesis of nucleoside triphosphates other than ATP. The ATP gamma phosphate is transferred to the NDP beta phosphate via a ping-pong mechanism, using a phosphorylated active-site intermediate. The chain is Nucleoside diphosphate kinase from Nitratiruptor sp. (strain SB155-2).